The chain runs to 349 residues: Flap endonuclease 1 (349 aa).

The interval Met1–Lys102 is N-domain. Mg(2+) contacts are provided by Asp31, Asp84, Glu156, Glu158, Asp177, Asp179, and Asp239. The interval Asp120–Gly261 is I-domain.

Belongs to the XPG/RAD2 endonuclease family. FEN1 subfamily. In terms of assembly, interacts with PCNA. PCNA stimulates the nuclease activity without altering cleavage specificity. Mg(2+) is required as a cofactor.

Structure-specific nuclease with 5'-flap endonuclease and 5'-3' exonuclease activities involved in DNA replication and repair. During DNA replication, cleaves the 5'-overhanging flap structure that is generated by displacement synthesis when DNA polymerase encounters the 5'-end of a downstream Okazaki fragment. Binds the unpaired 3'-DNA end and kinks the DNA to facilitate 5' cleavage specificity. Cleaves one nucleotide into the double-stranded DNA from the junction in flap DNA, leaving a nick for ligation. Also involved in the base excision repair (BER) pathway. Acts as a genome stabilization factor that prevents flaps from equilibrating into structures that lead to duplications and deletions. Also possesses 5'-3' exonuclease activity on nicked or gapped double-stranded DNA. The chain is Flap endonuclease 1 from Pyrobaculum neutrophilum (strain DSM 2338 / JCM 9278 / NBRC 100436 / V24Sta) (Thermoproteus neutrophilus).